We begin with the raw amino-acid sequence, 372 residues long: Probable dual-specificity RNA methyltransferase RlmN (372 aa).

Residue Glu-106 is the Proton acceptor of the active site. The Radical SAM core domain occupies 112 to 359 (YPQRNTVCIS…SCTVRDTRGR (248 aa)). The cysteines at positions 119 and 365 are disulfide-linked. Residues Cys-126, Cys-130, and Cys-133 each contribute to the [4Fe-4S] cluster site. S-adenosyl-L-methionine contacts are provided by residues 186–187 (GE), Ser-220, 243–245 (SLH), and Asn-322. The S-methylcysteine intermediate role is filled by Cys-365.

It belongs to the radical SAM superfamily. RlmN family. The cofactor is [4Fe-4S] cluster.

The protein localises to the cytoplasm. The enzyme catalyses adenosine(2503) in 23S rRNA + 2 reduced [2Fe-2S]-[ferredoxin] + 2 S-adenosyl-L-methionine = 2-methyladenosine(2503) in 23S rRNA + 5'-deoxyadenosine + L-methionine + 2 oxidized [2Fe-2S]-[ferredoxin] + S-adenosyl-L-homocysteine. The catalysed reaction is adenosine(37) in tRNA + 2 reduced [2Fe-2S]-[ferredoxin] + 2 S-adenosyl-L-methionine = 2-methyladenosine(37) in tRNA + 5'-deoxyadenosine + L-methionine + 2 oxidized [2Fe-2S]-[ferredoxin] + S-adenosyl-L-homocysteine. Specifically methylates position 2 of adenine 2503 in 23S rRNA and position 2 of adenine 37 in tRNAs. This Mycolicibacterium smegmatis (strain ATCC 700084 / mc(2)155) (Mycobacterium smegmatis) protein is Probable dual-specificity RNA methyltransferase RlmN.